The following is a 1659-amino-acid chain: MSASVICVDLSSESDEESPAKRRRLEDPLRLLTPSGRQSFPAKLLNIPKASLGSAMVVPVAETGPARETPVIVDPLRSMHIPSGITITKHQKNVLATNGNMNLSLAESNNNNNTTSLNKNVTPKQINVGTGQKVAWSVSSKAPSPNAVITTVPSHQVRVTPFNPIRLAPGSKIIPASNAMPAKIQPILGMGQPQQQAQAQQPKAIIVGFPKPNTAVAQMAQHQKPLTLQIHQKLIAGQQQHIASISQLQQVSLQQQQPLRPVSIQLQQQQNQRNGSLPGKQQKPLECPVPAQQEKLPRGPLPTKPAEPLSGPLPTEPDEPLGGPLPTRPKPPVRSLQQPVNKNTAIGVQIQQSQEPLGGTLPTRQKPLGGQLLTQQKPPVGSIQQSVKQNTGIGVQIQQIPKVVVGQQPQKVYLNKLQQEQQKIFLGHLQQQQQKTFLGQLQQEQQKILGQLQQQKQQQQQQQKKILGQSQQQKVPLGQPQPQQKLPQQLNNSLVQLQQQHQQRTSVGQLQQQQPHQSQQKNSMVHVKQQPQQQKKISVGQFQQQPQQQQKTSVAQLQQQPQQQQKISVGQLQQQSQQQQKPSVGQLQQQSQQQQTPLVGQLQRQTQQQQKTSAGQFQQQPQQQQKISAGQLQEHSQQQQKTLAGQLQQQAQQQLNTSAGQLQQQQKPPKASLAQQAAAQKQGAGLGQQQQFQSQPQQRTSAGLLQQQQMPQKKIVMQPQLPKTSVVLPRPQQLPKNPLLVAQQQSPKTPLVNSVMGPQFPSQQPSLPVVNQITHKSMTIQRLPMLQTVQKILPKQIAPQQTPPPAHIVQKQTMPNAAMQNPPFAHRPPIVRPMTVAKISPVPTNNKVCIPMKPQMASYVSPTDPTMTAARTLPFRSSQRKTSEAPMTSTHVQGFTASATPPQRLLATPPHCAAALNEPLLLNLPPTTSITPQLTPTTTPPPAGPSAAVQQQQLAKAAAIKLNSLPEASISPVNRSPTASAKRIQPITVLKKSDEEWQRHLEQQQQKKHVQLQSSSMTTIVLVESPPTTPPTDKPEPERGPMTVEKSSIKPMATDKQSRAIKRPAVMISTKKSGLVVTEIVDLDEIPDIPPEKRGKECFPPIKNAAKAAPSVNAPFTTEYAALLRLCREVDKSTHMERLVKGELTQYYYSAPESFVMSCGFRNLVTMAMARIRSESYLVYVHLKYVLDELASRRLTKMFPTVRAIPPASQFPLPPASQFPLPPTLTTPKQPAIVKAPGQQTVMAGREQDDEVEEVTLVNVGTVSCEERRRDERIRHFYRTLHAITKRIKMLEEAEVDLNDEDSSYLQLERFKKRACQIYEKICDLKGESKSVRRQLKKPIHFKDSDYPHFNNSLSAFVNRMQDFPDYHDVLQILEKCNKEKELGLAKYEMKRIAYDAFNKVGRMLQSRRKNDLYETVTHYTANGKDPASSDPELLAKLKENNKKQTKISDILEKYALEQDLNAEERQEARLKEKKLKQVKADEEAAKLAALAEDDDKPCTSAQAAAKAAALAALKRGPAARGNVIRKKRAANGRIFKIADDGDDSEEESDSEDDDVEEFVNNFQANSDVSDADSEVEAVTSPKRDALPLAEEEDVIDITRDETGKKNDEGTPNGRLKIMSVSSLNANFVHGQDLHRKPNPMPSAKPVIADQIIISDEES.

Disordered regions lie at residues 1 to 25 and 265 to 336; these read MSAS…RRRL and QLQQ…VRSL. A coiled-coil region spans residues 438 to 469; that stretch reads LGQLQQEQQKILGQLQQQKQQQQQQQKKILGQ. Low complexity-rich tracts occupy residues 506–520, 528–542, and 600–625; these read SVGQ…QSQQ, KQQP…VGQF, and GQLQ…QQQQ. 7 disordered regions span residues 506 to 542, 600 to 645, 658 to 713, 872 to 894, 924 to 952, 1023 to 1060, and 1536 to 1555; these read SVGQ…VGQF, GQLQ…TLAG, SAGQ…MPQK, TLPF…HVQG, LPPT…VQQQ, VESP…QSRA, and FKIA…EDDD. Positions 626 to 635 are enriched in polar residues; sequence KISAGQLQEH. Low complexity-rich tracts occupy residues 636–645 and 658–698; these read SQQQQKTLAG and SAGQ…QPQQ. Polar residues-rich tracts occupy residues 699–711 and 885–894; these read RTSA…QQMP and APMTSTHVQG. The interval 870–1659 is necessary for interaction with His3.3A and His3.3B; it reads ARTLPFRSSQ…DQIIISDEES (790 aa). A compositionally biased stretch (low complexity) spans 924–937; it reads LPPTTSITPQLTPT. The span at 1541-1555 shows a compositional bias: acidic residues; it reads DGDDSEEESDSEDDD.

In terms of assembly, interacts with p53 (via C-terminus). Interacts (via C-terminus) with His3.3A and His3.3B. Interacts with asf1. As to expression, ubiquitously expressed with higher levels in the head (at protein level). Expressed in the germ line, with prominent expression in primary spermatocytes and meiotic spermatocytes (at protein level). In ovaries, expressed in nurse cells and in the germinal vesicle of the ovarian follicle at stage 10 (at protein level).

It localises to the cytoplasm. It is found in the cytosol. The protein localises to the nucleus. Its subcellular location is the chromosome. Its function is as follows. Transcription regulator. Acts as a histone chaperone that facilitates deposition of histone H3.3. Has a role in chromatin remodeling together with asf1 and XNP. Has role in the transcriptional apoptotic response to oxidative and UV stress. In Drosophila melanogaster (Fruit fly), this protein is Daxx-like protein.